A 187-amino-acid polypeptide reads, in one-letter code: Large ribosomal subunit protein uL5 (187 aa).

It belongs to the universal ribosomal protein uL5 family. In terms of assembly, part of the 50S ribosomal subunit; part of the 5S rRNA/L5/L18/L25 subcomplex. Contacts the 5S rRNA and the P site tRNA. Forms a bridge to the 30S subunit in the 70S ribosome.

This is one of the proteins that bind and probably mediate the attachment of the 5S RNA into the large ribosomal subunit, where it forms part of the central protuberance. In the 70S ribosome it contacts protein S13 of the 30S subunit (bridge B1b), connecting the 2 subunits; this bridge is implicated in subunit movement. Contacts the P site tRNA; the 5S rRNA and some of its associated proteins might help stabilize positioning of ribosome-bound tRNAs. This chain is Large ribosomal subunit protein uL5, found in Gluconobacter oxydans (strain 621H) (Gluconobacter suboxydans).